The following is a 211-amino-acid chain: MVTTKRYTLPPLPYAYNALEPYISAEIMQLHHQKHHQGYVNGANAALEKLEKFRKGEAQIDIRAVLRDLSFHLNGHILHSIFWPNMAPPGKGGGKPGGKIADLINKFFGSFEKFKEEFSQAAKNVEGVGWAILVYEPLEEQLLILQIEKHNLMHAADAQVLLALDVWEHAYYLQYKNDRGSYVDNWWNVVNWDDVERRLQKALNGQIALKL.

Fe cation is bound by residues His31, His79, Asp165, and His169.

This sequence belongs to the iron/manganese superoxide dismutase family. Homotetramer. Fe cation is required as a cofactor.

The enzyme catalyses 2 superoxide + 2 H(+) = H2O2 + O2. Destroys superoxide anion radicals which are normally produced within the cells and which are toxic to biological systems. This chain is Superoxide dismutase [Fe] (sod), found in Pyrobaculum aerophilum (strain ATCC 51768 / DSM 7523 / JCM 9630 / CIP 104966 / NBRC 100827 / IM2).